Here is a 112-residue protein sequence, read N- to C-terminus: Large ribosomal subunit protein uL24 (112 aa).

Positions 92-112 (ERDGKQKTVRVRVSKSTGKDL) are disordered.

The protein belongs to the universal ribosomal protein uL24 family. As to quaternary structure, part of the 50S ribosomal subunit.

Functionally, one of two assembly initiator proteins, it binds directly to the 5'-end of the 23S rRNA, where it nucleates assembly of the 50S subunit. One of the proteins that surrounds the polypeptide exit tunnel on the outside of the subunit. The polypeptide is Large ribosomal subunit protein uL24 (Kocuria rhizophila (strain ATCC 9341 / DSM 348 / NBRC 103217 / DC2201)).